The following is a 214-amino-acid chain: Uridine kinase (214 aa).

Residue 15–22 (GASASGKS) participates in ATP binding.

Belongs to the uridine kinase family.

It localises to the cytoplasm. The enzyme catalyses uridine + ATP = UMP + ADP + H(+). It catalyses the reaction cytidine + ATP = CMP + ADP + H(+). The protein operates within pyrimidine metabolism; CTP biosynthesis via salvage pathway; CTP from cytidine: step 1/3. Its pathway is pyrimidine metabolism; UMP biosynthesis via salvage pathway; UMP from uridine: step 1/1. This Tolumonas auensis (strain DSM 9187 / NBRC 110442 / TA 4) protein is Uridine kinase.